The sequence spans 420 residues: MTKWKRANPNGTRDYLFEECTLIEEVEQKLRRTFLERGYEEIRTPTIEFYDVFAFQSRPIDEEKMYKFFDEKGRIIVLRPDMTIPLARVVGTQRCDTPLKVTYSGNVFRANESLAGKYNEIVQSGIEVIGIDNVRAEIECVISVIQSLQKLKVQSFTIEIGQVQLYKCIVKKLSIHEEEEKVLRTYIESKNYASLSNFIRDKKLDRCDETVKLLEKLPRLFGNLEVIEEAEKLASSNEMKMAITRVKEIYEAIEKLGYGSYISIDLGMIQHLDYYTGVIFKGYIYEIGEEIVSGGRYDELIGNFGEMLPAVGLAVQVNQIVKALQEQQEPYERKRIDIMIHYELNRLAEAERLRNLFQKDGKKVALSLFSNLNDTFQFARKNQIVTVVEAKSESLVEYVWKEKWVVQKEGETSCVTFKLR.

Belongs to the class-II aminoacyl-tRNA synthetase family. HisZ subfamily. In terms of assembly, heteromultimer composed of HisG and HisZ subunits.

Its subcellular location is the cytoplasm. The protein operates within amino-acid biosynthesis; L-histidine biosynthesis; L-histidine from 5-phospho-alpha-D-ribose 1-diphosphate: step 1/9. Required for the first step of histidine biosynthesis. May allow the feedback regulation of ATP phosphoribosyltransferase activity by histidine. The chain is ATP phosphoribosyltransferase regulatory subunit from Bacillus cereus (strain AH820).